The following is a 393-amino-acid chain: 1-deoxy-D-xylulose 5-phosphate reductoisomerase (393 aa).

The NADPH site is built by T10, G11, S12, I13, Q38, and N124. K125 contributes to the 1-deoxy-D-xylulose 5-phosphate binding site. Residue E126 coordinates NADPH. D150 provides a ligand contact to Mn(2+). S151, E152, S179, and H202 together coordinate 1-deoxy-D-xylulose 5-phosphate. Residue E152 coordinates Mn(2+). G208 is an NADPH binding site. 1-deoxy-D-xylulose 5-phosphate is bound by residues S215, N220, K221, and E224. A Mn(2+)-binding site is contributed by E224.

It belongs to the DXR family. It depends on Mg(2+) as a cofactor. The cofactor is Mn(2+).

The catalysed reaction is 2-C-methyl-D-erythritol 4-phosphate + NADP(+) = 1-deoxy-D-xylulose 5-phosphate + NADPH + H(+). It functions in the pathway isoprenoid biosynthesis; isopentenyl diphosphate biosynthesis via DXP pathway; isopentenyl diphosphate from 1-deoxy-D-xylulose 5-phosphate: step 1/6. Catalyzes the NADPH-dependent rearrangement and reduction of 1-deoxy-D-xylulose-5-phosphate (DXP) to 2-C-methyl-D-erythritol 4-phosphate (MEP). This Ralstonia nicotianae (strain ATCC BAA-1114 / GMI1000) (Ralstonia solanacearum) protein is 1-deoxy-D-xylulose 5-phosphate reductoisomerase.